A 338-amino-acid chain; its full sequence is Lipoyl synthase (338 aa).

A disordered region spans residues 1–22 (MTTVQEAVPNLIPTQDVTPRPA). Positions 84, 89, 95, 110, 114, 117, and 324 each coordinate [4Fe-4S] cluster. The 218-residue stretch at 96 to 313 (FSGGTATFMI…AEEGYKMGFK (218 aa)) folds into the Radical SAM core domain.

It belongs to the radical SAM superfamily. Lipoyl synthase family. Requires [4Fe-4S] cluster as cofactor.

It localises to the cytoplasm. The catalysed reaction is [[Fe-S] cluster scaffold protein carrying a second [4Fe-4S](2+) cluster] + N(6)-octanoyl-L-lysyl-[protein] + 2 oxidized [2Fe-2S]-[ferredoxin] + 2 S-adenosyl-L-methionine + 4 H(+) = [[Fe-S] cluster scaffold protein] + N(6)-[(R)-dihydrolipoyl]-L-lysyl-[protein] + 4 Fe(3+) + 2 hydrogen sulfide + 2 5'-deoxyadenosine + 2 L-methionine + 2 reduced [2Fe-2S]-[ferredoxin]. It functions in the pathway protein modification; protein lipoylation via endogenous pathway; protein N(6)-(lipoyl)lysine from octanoyl-[acyl-carrier-protein]: step 2/2. Its function is as follows. Catalyzes the radical-mediated insertion of two sulfur atoms into the C-6 and C-8 positions of the octanoyl moiety bound to the lipoyl domains of lipoate-dependent enzymes, thereby converting the octanoylated domains into lipoylated derivatives. This is Lipoyl synthase from Pseudomonas entomophila (strain L48).